A 459-amino-acid chain; its full sequence is Bifunctional protein GlmU (459 aa).

Residues 1 to 230 (MVKRYAVILA…FDETIGINDR (230 aa)) are pyrophosphorylase. UDP-N-acetyl-alpha-D-glucosamine is bound by residues 9–12 (LAAG), K23, Q73, and 78–79 (GT). Position 103 (D103) interacts with Mg(2+). Residues G140, E155, N170, and N228 each coordinate UDP-N-acetyl-alpha-D-glucosamine. N228 lines the Mg(2+) pocket. The segment at 231–251 (IALAEAERIMRDRICRQHMKN) is linker. Residues 252 to 459 (GVTIIDPACT…VDRLRGKKKS (208 aa)) are N-acetyltransferase. Residues R333 and K351 each contribute to the UDP-N-acetyl-alpha-D-glucosamine site. The Proton acceptor role is filled by H363. UDP-N-acetyl-alpha-D-glucosamine is bound by residues Y366 and N377. Residues 386-387 (NY), A423, and R440 each bind acetyl-CoA.

In the N-terminal section; belongs to the N-acetylglucosamine-1-phosphate uridyltransferase family. The protein in the C-terminal section; belongs to the transferase hexapeptide repeat family. In terms of assembly, homotrimer. It depends on Mg(2+) as a cofactor.

It is found in the cytoplasm. It carries out the reaction alpha-D-glucosamine 1-phosphate + acetyl-CoA = N-acetyl-alpha-D-glucosamine 1-phosphate + CoA + H(+). The catalysed reaction is N-acetyl-alpha-D-glucosamine 1-phosphate + UTP + H(+) = UDP-N-acetyl-alpha-D-glucosamine + diphosphate. Its pathway is nucleotide-sugar biosynthesis; UDP-N-acetyl-alpha-D-glucosamine biosynthesis; N-acetyl-alpha-D-glucosamine 1-phosphate from alpha-D-glucosamine 6-phosphate (route II): step 2/2. It functions in the pathway nucleotide-sugar biosynthesis; UDP-N-acetyl-alpha-D-glucosamine biosynthesis; UDP-N-acetyl-alpha-D-glucosamine from N-acetyl-alpha-D-glucosamine 1-phosphate: step 1/1. The protein operates within bacterial outer membrane biogenesis; LPS lipid A biosynthesis. Its function is as follows. Catalyzes the last two sequential reactions in the de novo biosynthetic pathway for UDP-N-acetylglucosamine (UDP-GlcNAc). The C-terminal domain catalyzes the transfer of acetyl group from acetyl coenzyme A to glucosamine-1-phosphate (GlcN-1-P) to produce N-acetylglucosamine-1-phosphate (GlcNAc-1-P), which is converted into UDP-GlcNAc by the transfer of uridine 5-monophosphate (from uridine 5-triphosphate), a reaction catalyzed by the N-terminal domain. The protein is Bifunctional protein GlmU of Geobacillus thermodenitrificans (strain NG80-2).